Here is a 129-residue protein sequence, read N- to C-terminus: Protein Turandot B1 (129 aa).

A signal peptide spans 1–21; sequence MNSATSLMCFALLLISPLCMG.

Belongs to the Turandot family.

The protein resides in the secreted. Its function is as follows. A humoral factor that may play a role in stress tolerance. The chain is Protein Turandot B1 (TotB1) from Drosophila erecta (Fruit fly).